The chain runs to 448 residues: MAAPTLGRLVLTHLLVALFGMGSWAAVNGIWVELPVVVKDLPEGWSLPSYLSVVVALGNLGLLVVTLWRQLAPGKGEQVPIQVVQVLSVVGTALLAPLWHHVAPVAGQLHSVAFLTLALVLAMACCTSNVTFLPFLSHLPPPFLRSFFLGQGLSALLPCVLALVQGVGRLECPPAPTNGTSGPPLDFPERFPASTFFWALTALLVTSAAAFRGLLLLLPSLPSVTTGGSGPELQLGSPGAEEEEKEEEEALPLQEPPSQAAGTIPGPDPEAHQLFSAHGAFLLGLMAFTSAVTNGVLPSVQSFSCLPYGRLAYHLAVVLGSAANPLACFLAMGVLCRSLAGLVGLSLLGMLFGAYLMALAILSPCPPLVGTTAGVVLVVLSWVLCLCVFSYVKVAASSLLHGGGRPALLAAGVAIQVGSLLGAGAMFPPTSIYHVFQSRKDCVDPCGP.

5 consecutive transmembrane segments (helical) span residues 14 to 34 (LLVA…WVEL), 47 to 67 (LPSY…VVTL), 79 to 99 (VPIQ…APLW), 124 to 144 (ACCT…PPFL), and 147 to 167 (FFLG…VQGV). Asn178 is a glycosylation site (N-linked (GlcNAc...) asparagine). A helical membrane pass occupies residues 191–211 (FPASTFFWALTALLVTSAAAF). A disordered region spans residues 225-267 (TTGGSGPELQLGSPGAEEEEKEEEEALPLQEPPSQAAGTIPGP). A compositionally biased stretch (acidic residues) spans 240–250 (AEEEEKEEEEA). The next 5 membrane-spanning stretches (helical) occupy residues 280 to 300 (AFLL…LPSV), 315 to 335 (LAVV…MGVL), 342 to 362 (LVGL…LAIL), 369 to 389 (VGTT…LCVF), and 407 to 427 (ALLA…GAMF).

This sequence belongs to the riboflavin transporter family. As to expression, widely expressed. Highly expressed in the testis, placenta and small intestine. Expressed at lower level in other tissues.

It localises to the cell membrane. It catalyses the reaction riboflavin(in) = riboflavin(out). The activity is strongly inhibited by riboflavin analogs, such as lumiflavin. Weakly inhibited by flavin adenine dinucleotide (FAD). In terms of biological role, plasma membrane transporter mediating the uptake by cells of the water soluble vitamin B2/riboflavin that plays a key role in biochemical oxidation-reduction reactions of the carbohydrate, lipid, and amino acid metabolism. Humans are unable to synthesize vitamin B2/riboflavin and must obtain it via intestinal absorption. Its function is as follows. (Microbial infection) May function as a cell receptor to retroviral envelopes similar to the porcine endogenous retrovirus (PERV-A). This is Solute carrier family 52, riboflavin transporter, member 1 from Homo sapiens (Human).